Here is a 471-residue protein sequence, read N- to C-terminus: Glutamate--tRNA ligase 1 (471 aa).

The 'HIGH' region motif lies at 10–20 (PSPTGFLHIGG). The interval 113–140 (ARKEGRPPRYDGRWRDRDPSEAPKDRDP) is disordered. A 'KMSKS' region motif is present at residues 239 to 243 (KLSKR). Lys242 lines the ATP pocket.

This sequence belongs to the class-I aminoacyl-tRNA synthetase family. Glutamate--tRNA ligase type 1 subfamily. In terms of assembly, monomer.

The protein resides in the cytoplasm. It carries out the reaction tRNA(Glu) + L-glutamate + ATP = L-glutamyl-tRNA(Glu) + AMP + diphosphate. Catalyzes the attachment of glutamate to tRNA(Glu) in a two-step reaction: glutamate is first activated by ATP to form Glu-AMP and then transferred to the acceptor end of tRNA(Glu). This is Glutamate--tRNA ligase 1 from Xanthobacter autotrophicus (strain ATCC BAA-1158 / Py2).